We begin with the raw amino-acid sequence, 684 residues long: Chaperone protein HtpG (684 aa).

Positions 1 to 329 are a; substrate-binding; that stretch reads MSKKGTIGVT…SPDIPLNVSR (329 aa). The segment at 330–548 is b; it reads SYLQSDANVK…FMRRMRDMAQ (219 aa). The c stretch occupies residues 549–684; it reads LQPGMSFYGE…EFIRRSQRLL (136 aa).

Belongs to the heat shock protein 90 family. As to quaternary structure, homodimer.

It is found in the cytoplasm. In terms of biological role, molecular chaperone. Has ATPase activity. In Porphyromonas gingivalis (strain ATCC BAA-308 / W83), this protein is Chaperone protein HtpG.